Reading from the N-terminus, the 306-residue chain is Glutaminase (306 aa).

Substrate is bound by residues S61, N111, E157, N164, Y188, Y240, and V258.

The protein belongs to the glutaminase family. In terms of assembly, homotetramer.

It catalyses the reaction L-glutamine + H2O = L-glutamate + NH4(+). The chain is Glutaminase from Pseudoalteromonas atlantica (strain T6c / ATCC BAA-1087).